Reading from the N-terminus, the 498-residue chain is Fascin-3 (498 aa).

This sequence belongs to the fascin family. In terms of tissue distribution, expressed in testis.

It is found in the cytoplasm. The protein localises to the cytoskeleton. Its function is as follows. Acts as an actin bundling protein. This chain is Fascin-3 (FSCN3), found in Homo sapiens (Human).